Here is an 832-residue protein sequence, read N- to C-terminus: Ventricular zone-expressed PH domain-containing protein homolog 1 (832 aa).

An interaction with TGFBR1 region spans residues 201–319 (AELLALMSQL…RYLVSQLANM (119 aa)). A disordered region spans residues 497-519 (DTHGSQLRNSSASHPSIIHSEPE). The segment covering 499-510 (HGSQLRNSSASH) has biased composition (polar residues). The interval 663–832 (ESTFPQQKDL…RESREVTTYL (170 aa)) is interaction with TGFBR1. The PH domain maps to 716-818 (QPLIEGKLKE…WLQCINVALA (103 aa)).

Belongs to the MELT/VEPH family. In terms of assembly, interacts with TGFBR1.

It localises to the cell membrane. In terms of biological role, interacts with TGF-beta receptor type-1 (TGFBR1) and inhibits dissociation of activated SMAD2 from TGFBR1, impeding its nuclear accumulation and resulting in impaired TGF-beta signaling. May also affect FOXO, Hippo and Wnt signaling. The sequence is that of Ventricular zone-expressed PH domain-containing protein homolog 1 (Veph1) from Rattus norvegicus (Rat).